The sequence spans 368 residues: L-arabinitol 4-dehydrogenase (368 aa).

Zn(2+) contacts are provided by cysteine 52, histidine 77, glutamate 78, cysteine 107, cysteine 110, cysteine 113, cysteine 121, and glutamate 162. NAD(+)-binding residues include aspartate 210, arginine 215, and isoleucine 282.

Belongs to the zinc-containing alcohol dehydrogenase family. As to quaternary structure, homotetramer. Zn(2+) serves as cofactor.

The catalysed reaction is L-arabinitol + NAD(+) = L-xylulose + NADH + H(+). Functionally, plays a key role in liamocins biosynthesis by providing the arabinol moity that is linked to 3,5-dihydroxydecanoic acid (provided by the HR-PKS PKS1) via ester bond formation catalyzed by the esterase EST1. The sequence is that of L-arabinitol 4-dehydrogenase from Aureobasidium melanogenum (Aureobasidium pullulans var. melanogenum).